The following is a 168-amino-acid chain: Peptide deformylase 1 (168 aa).

Residues Cys92 and His134 each coordinate Fe cation. Glu135 is an active-site residue. His138 contributes to the Fe cation binding site.

It belongs to the polypeptide deformylase family. Fe(2+) serves as cofactor.

The enzyme catalyses N-terminal N-formyl-L-methionyl-[peptide] + H2O = N-terminal L-methionyl-[peptide] + formate. Its function is as follows. Removes the formyl group from the N-terminal Met of newly synthesized proteins. Requires at least a dipeptide for an efficient rate of reaction. N-terminal L-methionine is a prerequisite for activity but the enzyme has broad specificity at other positions. The protein is Peptide deformylase 1 of Pseudomonas syringae pv. tomato (strain ATCC BAA-871 / DC3000).